The chain runs to 336 residues: MIEADRLVSADSSGAEEAVDRAIRPKLLAEYVGQPQVRSQMEIFIQAAKLRGDALDHLLIFGPPGLGKTTLANIVANEMGVNLRTTSGPVLEKAGDLAAMLTNLEPHDVLFIDEIHRLSPVVEEVLYPAMEDYQLDIMIGEGPAARSIKIDLPPFTLIGATTRAGSLTSPLRDRFGIVQRLEFYQIPDLQHIVSRSARHMGLEMSDEGALEVARRSRGTPRIANRLLRRVRDFAEVRHDGSISADIAAQALDMLNVDAEGFDYMDRKLLLAVIDKFFGGPVGLDNLAAAIGEERETIEDVLEPYLIQQGFLQRTPRGRMATVRAWNHFGITPPEMP.

The segment at 4–184 (ADRLVSADSS…FGIVQRLEFY (181 aa)) is large ATPase domain (RuvB-L). Residues isoleucine 23, arginine 24, glycine 65, lysine 68, threonine 69, threonine 70, 131 to 133 (EDY), arginine 174, tyrosine 184, and arginine 221 each bind ATP. A Mg(2+)-binding site is contributed by threonine 69. The segment at 185–255 (QIPDLQHIVS…IAAQALDMLN (71 aa)) is small ATPAse domain (RuvB-S). The segment at 258 to 336 (AEGFDYMDRK…HFGITPPEMP (79 aa)) is head domain (RuvB-H). Residues arginine 294, arginine 313, and arginine 318 each contribute to the DNA site.

This sequence belongs to the RuvB family. Homohexamer. Forms an RuvA(8)-RuvB(12)-Holliday junction (HJ) complex. HJ DNA is sandwiched between 2 RuvA tetramers; dsDNA enters through RuvA and exits via RuvB. An RuvB hexamer assembles on each DNA strand where it exits the tetramer. Each RuvB hexamer is contacted by two RuvA subunits (via domain III) on 2 adjacent RuvB subunits; this complex drives branch migration. In the full resolvosome a probable DNA-RuvA(4)-RuvB(12)-RuvC(2) complex forms which resolves the HJ.

The protein resides in the cytoplasm. The catalysed reaction is ATP + H2O = ADP + phosphate + H(+). The RuvA-RuvB-RuvC complex processes Holliday junction (HJ) DNA during genetic recombination and DNA repair, while the RuvA-RuvB complex plays an important role in the rescue of blocked DNA replication forks via replication fork reversal (RFR). RuvA specifically binds to HJ cruciform DNA, conferring on it an open structure. The RuvB hexamer acts as an ATP-dependent pump, pulling dsDNA into and through the RuvAB complex. RuvB forms 2 homohexamers on either side of HJ DNA bound by 1 or 2 RuvA tetramers; 4 subunits per hexamer contact DNA at a time. Coordinated motions by a converter formed by DNA-disengaged RuvB subunits stimulates ATP hydrolysis and nucleotide exchange. Immobilization of the converter enables RuvB to convert the ATP-contained energy into a lever motion, pulling 2 nucleotides of DNA out of the RuvA tetramer per ATP hydrolyzed, thus driving DNA branch migration. The RuvB motors rotate together with the DNA substrate, which together with the progressing nucleotide cycle form the mechanistic basis for DNA recombination by continuous HJ branch migration. Branch migration allows RuvC to scan DNA until it finds its consensus sequence, where it cleaves and resolves cruciform DNA. The sequence is that of Holliday junction branch migration complex subunit RuvB from Klebsiella pneumoniae (strain 342).